The chain runs to 155 residues: MSFRLWGRCIFFFCFLLEAIDSRGGRRGGKGKGKSNLQFAQVAEFSLVQTVLSDNRSAQIITGSHFSQTYRLGYKLLIICKARGDPRPTIKWYKEGAEIQPKASIHYYEKPIENDTIWSKLEVDPATMGDQGVYACVANNPHGVMAKNFKAEYTY.

Positions 1–22 (MSFRLWGRCIFFFCFLLEAIDS) are cleaved as a signal peptide. N-linked (GlcNAc...) asparagine glycans are attached at residues Asn-55 and Asn-114. The region spanning 73-154 (GYKLLIICKA…MAKNFKAEYT (82 aa)) is the Ig-like C2-type domain. A disulfide bond links Cys-80 and Cys-136.

As to quaternary structure, interacts with the non-alpha subunit of nicotinic acetylcholine receptor unc-29 and lev-10 to stabilize the complex formed between unc-29 and lev-10. Expressed in body wall muscle cells, the pharyngeal muscle cell pm6 and in four head neurons.

It is found in the synapse. The protein resides in the secreted. In terms of biological role, required for the localization of acetylcholine receptors at neuromuscular junctions and for subsequently controlling the response evoked by receptor stimulation. This is Immunoglobulin domain-containing protein oig-4 from Caenorhabditis elegans.